The following is a 471-amino-acid chain: 7-dehydrocholesterol reductase (471 aa).

Residues 1-23 (MASKSQHNAPKVKSPNGKAGSQG) are disordered. The residue at position 14 (serine 14) is a Phosphoserine. 8 consecutive transmembrane segments (helical) span residues 36-56 (LASIIFLLLFAPFIVYYFIMA), 95-115 (LYALWVSFQVLLYSWLPDFCH), 144-164 (LQAWLITHILWFVNAYLLSWF), 173-193 (WIPLLWCANILGYAVSTFAMI), 233-253 (LFFNGRPGIVAWTLINLSFAA), 262-282 (VTNSMILVNVLQAIYVLDFFW), 302-322 (LGWGDCVWLPYLYTLQGLYLV), and 327-347 (QLSTPNALGILLLGLVGYYIF). NADP(+) contacts are provided by residues lysine 354, arginine 358, leucine 391, tryptophan 396, and 403 to 404 (NY). Residues 416-436 (LACGGGHLLPYFYIIYMTILL) form a helical membrane-spanning segment. NADP(+) is bound by residues aspartate 443, 447 to 451 (CANKY), and tyrosine 458.

The protein belongs to the ERG4/ERG24 family. Interacts with DHCR24; this interaction regulates DHCR7 activity. Interacts with TMEM147.

Its subcellular location is the endoplasmic reticulum membrane. It carries out the reaction cholesterol + NADP(+) = 7-dehydrocholesterol + NADPH + H(+). The catalysed reaction is 7-dehydrodesmosterol + NADPH + H(+) = desmosterol + NADP(+). It catalyses the reaction 5,6alpha-epoxy-5alpha-cholestan-3beta-ol + H2O = 5alpha-cholestane-3beta,5,6beta-triol. The enzyme catalyses 5,6beta-epoxy-5beta-cholestan-3beta-ol + H2O = 5alpha-cholestane-3beta,5,6beta-triol. The protein operates within steroid biosynthesis; cholesterol biosynthesis. Functionally, oxidoreductase that catalyzes the last step of the cholesterol synthesis pathway, which transforms cholesta-5,7-dien-3beta-ol (7-dehydrocholesterol,7-DHC) into cholesterol by reducing the C7-C8 double bond of its sterol core. Can also metabolize cholesta-5,7,24-trien-3beta-ol (7-dehydrodemosterol, 7-DHD) to desmosterol, which is then metabolized by the Delta(24)-sterol reductase (DHCR24) to cholesterol. Modulates ferroptosis (a form of regulated cell death driven by iron-dependent lipid peroxidation) through the metabolic breakdown of the anti-ferroptotic metabolites 7-DHC and 7-DHD which, when accumulated, divert the propagation of peroxyl radical-mediated damage from phospholipid components to its sterol core, protecting plasma and mitochondrial membranes from phospholipid autoxidation. In terms of biological role, component of the microsomal antiestrogen binding site (AEBS), a multiproteic complex at the ER membrane that consists of an association between cholestenol Delta-isomerase/EBP and DHCR7. This complex is responsible for cholesterol-5,6-epoxide hydrolase (ChEH) activity, which consists in the hydration of cholesterol-5,6-epoxides (5,6-EC) into cholestane-3beta,5alpha,6beta-triol (CT). The precise role of each component of this complex has not been described yet. This chain is 7-dehydrocholesterol reductase (Dhcr7), found in Mus musculus (Mouse).